Consider the following 224-residue polypeptide: C-&gt;U-editing enzyme APOBEC-2 (224 aa).

Residues 1 to 24 (MAQKEEAAVATEAASQNGEDLENL) form a disordered region. Zn(2+) is bound by residues E60 and H98. The CMP/dCMP-type deaminase domain maps to 64–169 (GRNKTFLCYV…PEIQAALKKL (106 aa)). Residue E100 is the Proton donor of the active site. Residues C128 and C131 each coordinate Zn(2+).

Belongs to the cytidine and deoxycytidylate deaminase family. Homotetramer. The cofactor is Zn(2+). In terms of tissue distribution, expressed exclusively in heart and skeletal muscle.

It carries out the reaction cytidine(6666) in apoB mRNA + H2O + H(+) = uridine(6666) in apoB mRNA + NH4(+). Its function is as follows. Probable C to U editing enzyme whose physiological substrate is not yet known. Does not display detectable apoB mRNA editing. Has a low intrinsic cytidine deaminase activity. May play a role in the epigenetic regulation of gene expression through the process of active DNA demethylation. This is C-&gt;U-editing enzyme APOBEC-2 (APOBEC2) from Homo sapiens (Human).